The chain runs to 450 residues: MRECISIHIGQAGIQVGNACWELYCLEHGIQPDGQMPGDKTVGGGDDAFNTFFSETGAGKHVPRAVFVDLEPTVIDEVRTGTYRQLFHPEQLISGKEDAANNFARGHYTIGKEIVDLCLDRIRKLADNCTGLQGFLVFNAVGGGTGSGLGSLLLERLSVDYGKKSKLGFTVYPSPQVSTSVVEPYNSVLSTHSLLEHTDVSILLDNEAIYDICRRSLNIERPTYTNLNRLVSQVISSLTASLRFDGALNVDVTEFQTNLVPYPRIHFMLSSYAPVISAEKAFHEQLSVAEITNSAFEPASMMAKCDPRHGKYMACCLMYRGDVVPKDVNAAVGTIKTKRTIQFVDWCPTGFKCGINYQPPTVVPGGDLAKVQRAVCMISNSTSVAEVFSRIDHKFDLMYAKRAFVHWYVGEGMEEGEFSEAREDLAALEKDYEEVGAEGGDDEDDEGEEY.

Residues Gln-11, Glu-71, Gly-144, Thr-145, Thr-179, Asn-206, and Asn-228 each coordinate GTP. Mg(2+) is bound at residue Glu-71. Glu-254 is a catalytic residue. At Thr-349 the chain carries Phosphothreonine. Positions 430 to 450 (KDYEEVGAEGGDDEDDEGEEY) are disordered. The span at 431-450 (DYEEVGAEGGDDEDDEGEEY) shows a compositional bias: acidic residues.

This sequence belongs to the tubulin family. In terms of assembly, dimer of alpha and beta chains. A typical microtubule is a hollow water-filled tube with an outer diameter of 25 nm and an inner diameter of 15 nM. Alpha-beta heterodimers associate head-to-tail to form protofilaments running lengthwise along the microtubule wall with the beta-tubulin subunit facing the microtubule plus end conferring a structural polarity. Microtubules usually have 13 protofilaments but different protofilament numbers can be found in some organisms and specialized cells. Interacts with TFCB. Mg(2+) serves as cofactor. Undergoes a tyrosination/detyrosination cycle, the cyclic removal and re-addition of a C-terminal tyrosine residue by the enzymes tubulin tyrosine carboxypeptidase (TTCP) and tubulin tyrosine ligase (TTL), respectively. In terms of processing, acetylation of alpha chains at Lys-40 stabilizes microtubules and affects affinity and processivity of microtubule motors. This modification has a role in multiple cellular functions, ranging from cell motility, cell cycle progression or cell differentiation to intracellular trafficking and signaling.

It localises to the cytoplasm. Its subcellular location is the cytoskeleton. It catalyses the reaction GTP + H2O = GDP + phosphate + H(+). Tubulin is the major constituent of microtubules, a cylinder consisting of laterally associated linear protofilaments composed of alpha- and beta-tubulin heterodimers. Microtubules grow by the addition of GTP-tubulin dimers to the microtubule end, where a stabilizing cap forms. Below the cap, tubulin dimers are in GDP-bound state, owing to GTPase activity of alpha-tubulin. The chain is Tubulin alpha-6 chain (TUBA6) from Arabidopsis thaliana (Mouse-ear cress).